The sequence spans 664 residues: Probable 3',5'-cyclic phosphodiesterase pde-1 (664 aa).

Disordered regions lie at residues 24–60 (TSSASEEHGDSDKKLLSVQLITPRDEEEQTSSRSIKI) and 113–142 (RNQKEKSNSDDNCQEKEPTSPSSSRKKSYD). Basic and acidic residues-rich tracts occupy residues 28–38 (SEEHGDSDKKL) and 114–130 (NQKEKSNSDDNCQEKEP). A PDEase domain is found at 256-634 (VQCPIPPEIA…AHWKERAAKE (379 aa)). Histidine 333 acts as the Proton donor in catalysis. Positions 337, 373, 374, and 480 each coordinate a divalent metal cation. Disordered regions lie at residues 564–597 (DSLFPPSVDGGDDKSPSNALSPLPDLRNSSTSPS) and 630–664 (RAAKEEEERKIKEAAEAEAAAKQVEENKENGVTTN). Residues 630 to 644 (RAAKEEEERKIKEAA) are compositionally biased toward basic and acidic residues.

This sequence belongs to the cyclic nucleotide phosphodiesterase family. Interacts with cmd-1 in the presence of Ca(2+). It depends on a divalent metal cation as a cofactor. Expressed in AFD thermosensory neurons.

It catalyses the reaction a nucleoside 3',5'-cyclic phosphate + H2O = a nucleoside 5'-phosphate + H(+). Its function is as follows. Redundantly with pde-5, plays a role in the AFD thermosensory neurons to regulate microvilli receptive ending morphology, possibly by regulating cGMP levels. The protein is Probable 3',5'-cyclic phosphodiesterase pde-1 (pde-1) of Caenorhabditis elegans.